We begin with the raw amino-acid sequence, 448 residues long: Endoglucanase (448 aa).

Positions 1–34 (MFSKIKKINFFKKTFSFLIAVVMMLFTVLGTNTY) are cleaved as a signal peptide. Residues H70, 74 to 75 (WY), Y101, and H137 each bind substrate. E175 (proton donor) is an active-site residue. Y237 provides a ligand contact to substrate. E263 functions as the Nucleophile in the catalytic mechanism. Substrate is bound by residues 269 to 270 (AS), W297, and 302 to 304 (KSE).

It belongs to the glycosyl hydrolase 5 (cellulase A) family.

The enzyme catalyses Endohydrolysis of (1-&gt;4)-beta-D-glucosidic linkages in cellulose, lichenin and cereal beta-D-glucans.. This is Endoglucanase (eglA) from Clostridium saccharobutylicum.